We begin with the raw amino-acid sequence, 624 residues long: ERAD-associated E3 ubiquitin-protein ligase ASI1 (624 aa).

Topologically, residues 1–69 are perinuclear space; sequence MNSSTSSENV…SEEIPPTLRS (69 aa). N-linked (GlcNAc...) asparagine glycans are attached at residues Asn-2, Asn-19, and Asn-29. A helical membrane pass occupies residues 70-90; that stretch reads VFDTIGFFFSPYAIFCFVIAI. Over 91–116 the chain is Nuclear; that stretch reads VLNRFVVFYAVLNNGSRRTLPLWLSN. The chain crosses the membrane as a helical span at residues 117–137; the sequence is VFHVSAVVVLAMVSLGPLTLG. Topologically, residues 138–152 are perinuclear space; sequence KDFKILGDPAFAQEK. Residues 153–173 traverse the membrane as a helical segment; the sequence is FLLNIFYAFAYSYCVETIFTI. Topologically, residues 174-209 are nuclear; it reads MRNSSPLEGTDYSLFELSIQFYTMTNNNTKFLDSPD. Residues 210–230 form a helical membrane-spanning segment; that stretch reads YIIDCSMAILSRILIHLVEIF. Topologically, residues 231–273 are perinuclear space; the sequence is RLRNYRLLFSTIMNLCHICYLGIRVKQGGWKSLPFSVKFRHFP. A helical membrane pass occupies residues 274–294; that stretch reads KLFSVSIICLSLLIFKLSCLI. Residues 295 to 624 are Nuclear-facing; it reads RWDPFGKSRN…CKVHPVSDSK (330 aa). The interval 467–490 is disordered; it reads TSDDEYSEDYEPSEVESLGDSDEE. Residues 468-490 show a composition bias toward acidic residues; it reads SDDEYSEDYEPSEVESLGDSDEE. The segment at 568–608 adopts an RING-type; atypical zinc-finger fold; that stretch reads CAVCKVNERNTVLWPCRCFAICEDCRISLGLRGFSTCVCCR.

Component of the Asi complex, which contains ASI1, ASI2 and ASI3. Interacts directly with ASI3. In terms of processing, glycosylation is not required for ASI1 function.

The protein localises to the nucleus inner membrane. It catalyses the reaction S-ubiquitinyl-[E2 ubiquitin-conjugating enzyme]-L-cysteine + [acceptor protein]-L-lysine = [E2 ubiquitin-conjugating enzyme]-L-cysteine + N(6)-ubiquitinyl-[acceptor protein]-L-lysine.. E3 ubiquitin-protein ligase which transfers ubiquitin to substrates promoting their degradation. Part of the nuclear inner membrane (INM)-specific branch of the ER-associated degradation (ERAD) pathway, required for the elimination of misfolded proteins in the INM, a specialized ER subdomain. Required for ERG11 degradation. Negative regulator of SPS-sensor signaling. Together with ASI2 and ASI3, prevents the unprocessed precursor forms of STP1 and STP2 that escape cytoplasmic anchoring from inducing SPS-sensor-regulated genes in the absence of inducing signals. Controls amino acid permease (AAP) gene expression in response to amino acid availability, a process mediated by the transcription factors STP1 and STP1. This chain is ERAD-associated E3 ubiquitin-protein ligase ASI1 (ASI1), found in Saccharomyces cerevisiae (strain ATCC 204508 / S288c) (Baker's yeast).